We begin with the raw amino-acid sequence, 623 residues long: Pyranose 2-oxidase (623 aa).

The N-terminal stretch at 1-28 (MSTSSSDPFFNFAKSSFRSAAAQKASAS) is a signal peptide. Residues 29-38 (SLPPLPGPDK) constitute a propeptide that is removed on maturation. His-167 carries the post-translational modification Tele-8alpha-FAD histidine. Gln-448 and His-450 together coordinate substrate. Catalysis depends on His-548, which acts as the Proton acceptor. The active site involves Asn-593.

It belongs to the GMC oxidoreductase family. As to quaternary structure, homotetramer. It depends on FAD as a cofactor.

The protein resides in the periplasm. It catalyses the reaction D-glucose + O2 = 2-dehydro-D-glucose + H2O2. Its function is as follows. Catalyzes the oxidation of various aldopyranoses and disaccharides on carbon-2 to the corresponding 2-keto sugars concomitant with the reduction of O(2) to H(2)O(2). Plays an important role in lignin degradation of wood rot fungi by supplying the essential cosubstrate H(2)O(2) for the ligninolytic peroxidases, lignin peroxidase and manganese-dependent peroxidase. The polypeptide is Pyranose 2-oxidase (p2ox) (Peniophora sp. (strain SG) (White-rot fungus)).